Here is a 1099-residue protein sequence, read N- to C-terminus: Sodium/potassium/calcium exchanger 1 (1099 aa).

At 1–452 the chain is on the extracellular side; sequence MGKLIRMGPQ…DLFSVEERRQ (452 aa). The span at 123 to 134 shows a compositional bias: polar residues; sequence PTTTKNNYSPTA. 3 disordered regions span residues 123–150, 169–199, and 284–304; these read PTTT…SSRT, TPRG…RVGT, and PRRV…KSNP. The N-linked (GlcNAc...) asparagine glycan is linked to asparagine 290. Residues 453 to 473 form a helical membrane-spanning segment; it reads GWVVLHVFGMMYVFVALAIVC. Over 474–497 the chain is Cytoplasmic; that stretch reads DEYFVPALGVITDKLQISEDVAGA. One copy of the Alpha-1 repeat lies at 494-534; the sequence is VAGATFMAAGGSAPELFTSLIGVFISHSNVGIGTIVGSAVF. The helical transmembrane segment at 498-518 threads the bilayer; sequence TFMAAGGSAPELFTSLIGVFI. Topologically, residues 519 to 522 are extracellular; it reads SHSN. The helical transmembrane segment at 523–543 threads the bilayer; it reads VGIGTIVGSAVFNILFVIGTC. The Cytoplasmic portion of the chain corresponds to 544–563; the sequence is SLFSREILNLTWWPLFRDVS. The chain crosses the membrane as a helical span at residues 564 to 584; the sequence is FYILDLIMLILFFLDSLIAWW. A topological domain (extracellular) is located at residue glutamate 585. A helical transmembrane segment spans residues 586–606; that stretch reads SLLLLLAYAFYVFTMKWNKHI. Over 607–907 the chain is Cytoplasmic; it reads EVWVKEQLSR…SLDWPETRQK (301 aa). Position 658 is a phosphoserine (serine 658). A disordered region spans residues 690–901; it reads EKEEESLNQG…GNEEPLSLDW (212 aa). Residue threonine 724 is modified to Phosphothreonine. Residues 757–769 show a composition bias toward acidic residues; that stretch reads PGEEGETAGEGET. Basic and acidic residues-rich tracts occupy residues 813–825 and 835–849; these read EIHA…KGNE and AENH…KGVE. Acidic residues predominate over residues 857–892; it reads GDSEEEEEEEEEQEEEEEEEEQEEEEEEEEEEEEKG. Residues 908–928 form a helical membrane-spanning segment; that stretch reads QAIYLFLLPIVFPLWLTVPDV. At 929 to 935 the chain is on the extracellular side; sequence RRQESRK. Residues 936 to 956 form a helical membrane-spanning segment; it reads FFVFTFLGSIMWIAMFSYLMV. Residues 957–971 lie on the Cytoplasmic side of the membrane; sequence WWAHQVGETIGISEE. The chain crosses the membrane as a helical span at residues 972-992; that stretch reads IMGLTILAAGTSIPDLITSVI. The Alpha-2 repeat unit spans residues 979 to 1010; that stretch reads AAGTSIPDLITSVIVARKGLGDMAVSSSVGSN. Over 993–1010 the chain is Extracellular; it reads VARKGLGDMAVSSSVGSN. Residues 1011-1031 traverse the membrane as a helical segment; it reads IFDITVGLPVPWLLFSLINGL. Topologically, residues 1032 to 1039 are cytoplasmic; the sequence is QPVPVSSN. Residues 1040–1060 traverse the membrane as a helical segment; sequence GLFCAIVLLFLMLLFVISSIA. The Extracellular portion of the chain corresponds to 1061–1068; sequence SCKWRMNK. Residues 1069 to 1089 traverse the membrane as a helical segment; sequence ILGFTMFLLYFVFLIISVMLE. Residues 1090 to 1099 are Cytoplasmic-facing; sequence DRIISCPVSV.

The protein belongs to the Ca(2+):cation antiporter (CaCA) (TC 2.A.19) family. SLC24A subfamily. In terms of processing, the uncleaved signal sequence is required for efficient membrane targeting and proper membrane integration. In terms of tissue distribution, expressed in the retina, particularly in the inner segment, outer and inner nuclear layers, and ganglion cell layer.

It localises to the cell membrane. The enzyme catalyses Ca(2+)(out) + K(+)(out) + 4 Na(+)(in) = Ca(2+)(in) + K(+)(in) + 4 Na(+)(out). Its function is as follows. Calcium, potassium:sodium antiporter that transports 1 Ca(2+) and 1 K(+) in exchange for 4 Na(+). Critical component of the visual transduction cascade, controlling the calcium concentration of outer segments during light and darkness. Light causes a rapid lowering of cytosolic free calcium in the outer segment of both retinal rod and cone photoreceptors and the light-induced lowering of calcium is caused by extrusion via this protein which plays a key role in the process of light adaptation. The protein is Sodium/potassium/calcium exchanger 1 of Homo sapiens (Human).